Consider the following 77-residue polypeptide: MKLMIFAGLVLFAIVSLIEAQAEHEKPCLPEYKVCTHAPGNCCSDLVYDCYGRYKSGAQIGRNCFCLQKGVIYKREN.

Positions 1–20 (MKLMIFAGLVLFAIVSLIEA) are cleaved as a signal peptide. Positions 21–26 (QAEHEK) are excised as a propeptide.

Belongs to the neurotoxin 19 (CSTX) family. 08 (U8-Lctx) subfamily. Contains 4 disulfide bonds. Expressed by the venom gland.

The protein resides in the secreted. The protein is U8-lycotoxin-Ls1q of Lycosa singoriensis (Wolf spider).